Consider the following 392-residue polypeptide: Potassium/proton antiporter CemA (392 aa).

4 helical membrane passes run 174–194 (FLAS…VWWL), 269–289 (SLAN…MLSL), 316–336 (FLIL…WEVI), and 352–372 (FIFM…KYWI).

This sequence belongs to the CemA family.

Its subcellular location is the plastid. It localises to the chloroplast inner membrane. It catalyses the reaction K(+)(in) + H(+)(out) = K(+)(out) + H(+)(in). Functionally, contributes to K(+)/H(+) antiport activity by supporting proton efflux to control proton extrusion and homeostasis in chloroplasts in a light-dependent manner to modulate photosynthesis. Prevents excessive induction of non-photochemical quenching (NPQ) under continuous-light conditions. Indirectly promotes efficient inorganic carbon uptake into chloroplasts. The chain is Potassium/proton antiporter CemA from Nephroselmis olivacea (Green alga).